The following is a 145-amino-acid chain: Probable low molecular weight protein-tyrosine-phosphatase EpsP (145 aa).

Cys9 serves as the catalytic Nucleophile. The active site involves Arg15. Asp114 (proton donor) is an active-site residue.

This sequence belongs to the low molecular weight phosphotyrosine protein phosphatase family.

It carries out the reaction O-phospho-L-tyrosyl-[protein] + H2O = L-tyrosyl-[protein] + phosphate. It functions in the pathway glycan metabolism; exopolysaccharide biosynthesis. Its function is as follows. May be involved in assembly or function of the EPS I polymerization/export complex and/or the EpsB ATPase. Alternatively it may function in the removal of the terminal phosphate from C55-isoprenyl pyrophosphate in order to recycle the C55-isoprenyl phosphate lipid carrier used in the synthesis of polysaccharide repeat units. The sequence is that of Probable low molecular weight protein-tyrosine-phosphatase EpsP (epsP) from Ralstonia solanacearum (Pseudomonas solanacearum).